A 477-amino-acid polypeptide reads, in one-letter code: Ribulose bisphosphate carboxylase large chain (477 aa).

A propeptide spanning residues 1–2 (MS) is cleaved from the precursor. Pro-3 is modified (N-acetylproline). Residues Asn-123 and Thr-173 each contribute to the substrate site. The Proton acceptor role is filled by Lys-175. Lys-177 serves as a coordination point for substrate. Residues Lys-201, Asp-203, and Glu-204 each coordinate Mg(2+). The residue at position 201 (Lys-201) is an N6-carboxylysine. Catalysis depends on His-294, which acts as the Proton acceptor. The substrate site is built by Arg-295, His-327, and Ser-379.

This sequence belongs to the RuBisCO large chain family. Type I subfamily. In terms of assembly, heterohexadecamer of 8 large chains and 8 small chains; disulfide-linked. The disulfide link is formed within the large subunit homodimers. The cofactor is Mg(2+). In terms of processing, the disulfide bond which can form between Cys-247 in the large chain dimeric partners within the hexadecamer appears to be associated with oxidative stress and protein turnover.

It localises to the plastid. It is found in the chloroplast. The catalysed reaction is 2 (2R)-3-phosphoglycerate + 2 H(+) = D-ribulose 1,5-bisphosphate + CO2 + H2O. It carries out the reaction D-ribulose 1,5-bisphosphate + O2 = 2-phosphoglycolate + (2R)-3-phosphoglycerate + 2 H(+). RuBisCO catalyzes two reactions: the carboxylation of D-ribulose 1,5-bisphosphate, the primary event in carbon dioxide fixation, as well as the oxidative fragmentation of the pentose substrate in the photorespiration process. Both reactions occur simultaneously and in competition at the same active site. This chain is Ribulose bisphosphate carboxylase large chain (rbcL), found in Triticum aestivum (Wheat).